The primary structure comprises 86 residues: Evasin-3 (86 aa).

The signal sequence occupies residues 1 to 20 (MRALLARLLLCVLVVSDSKG). 3 disulfides stabilise this stretch: Cys42–Cys57, Cys46–Cys59, and Cys53–Cys70. Asn45 carries N-linked (GlcNAc...) asparagine glycosylation. Asn76 carries N-linked (GlcNAc...) asparagine glycosylation.

Monomer.

The protein localises to the secreted. Functionally, salivary chemokine-binding protein which shows chemokine neutralizing activity and binds to host chemokines CXCL1, CXCL2, CXCL3, CXCL5, CXCL6 and CXCL8. Binds to CXCL8 with 1:1 stoichiometry. Disrupts CXCL8 homodimer formation, disrupts the glycosaminoglycan-binding site of CXCL8 and inhibits the interaction of CXCL8 with CXCR2. The chain is Evasin-3 from Rhipicephalus sanguineus (Brown dog tick).